The following is a 235-amino-acid chain: Putative N-acetylmannosamine-6-phosphate 2-epimerase (235 aa).

This sequence belongs to the NanE family.

The enzyme catalyses an N-acyl-D-glucosamine 6-phosphate = an N-acyl-D-mannosamine 6-phosphate. The protein operates within amino-sugar metabolism; N-acetylneuraminate degradation; D-fructose 6-phosphate from N-acetylneuraminate: step 3/5. Converts N-acetylmannosamine-6-phosphate (ManNAc-6-P) to N-acetylglucosamine-6-phosphate (GlcNAc-6-P). The chain is Putative N-acetylmannosamine-6-phosphate 2-epimerase from Enterobacter sp. (strain 638).